Here is a 217-residue protein sequence, read N- to C-terminus: 3-dehydroquinate dehydratase (217 aa).

3-dehydroquinate is bound by residues 26 to 28 and R59; that span reads EFR. The active-site Proton donor/acceptor is H114. The Schiff-base intermediate with substrate role is filled by K140. 3-dehydroquinate contacts are provided by R178 and Q201.

This sequence belongs to the type-I 3-dehydroquinase family. Homodimer.

The enzyme catalyses 3-dehydroquinate = 3-dehydroshikimate + H2O. It participates in metabolic intermediate biosynthesis; chorismate biosynthesis; chorismate from D-erythrose 4-phosphate and phosphoenolpyruvate: step 3/7. In terms of biological role, involved in the third step of the chorismate pathway, which leads to the biosynthesis of aromatic amino acids. Catalyzes the cis-dehydration of 3-dehydroquinate (DHQ) and introduces the first double bond of the aromatic ring to yield 3-dehydroshikimate. The polypeptide is 3-dehydroquinate dehydratase (Hydrogenobaculum sp. (strain Y04AAS1)).